Consider the following 514-residue polypeptide: Cilia- and flagella-associated protein 53 (514 aa).

2 coiled-coil regions span residues 91-148 and 203-474; these read IINI…RQDF and KLWE…REFE.

This sequence belongs to the CFAP53 family. In terms of assembly, microtubule inner protein component of sperm flagellar doublet microtubules. Interacts with PIERCE1 and PIERCE2; the interactions link outer dynein arms docking complex (ODA-DC) to the internal microtubule inner proteins (MIP) in cilium axoneme. Interacts with CCDC38. Interacts with CCDC42 and IFT88. Interacts with centriolar satellite proteins PIBF1/CEP90 and PCM1. Interacts with dyneins DNAIC1, DNAIC2 AND DNAH11 and with ODA-DC component ODAD4/TTC25. Expressed in skin fibroblasts (at protein level). Expressed in nasal respiratory epithelial cells (at protein level). Expressed in airway epithelial cells.

The protein localises to the cytoplasm. Its subcellular location is the cytoskeleton. It is found in the cilium axoneme. It localises to the flagellum axoneme. The protein resides in the microtubule organizing center. The protein localises to the centrosome. Its subcellular location is the centriole. It is found in the centriolar satellite. It localises to the spindle pole. The protein resides in the cell projection. The protein localises to the cilium. Functionally, microtubule inner protein (MIP) part of the dynein-decorated doublet microtubules (DMTs) in cilia axoneme, which is required for motile cilia beating. Regulates motility patterns of both 9+0 and 9+2 motile cilia through differential localization and recruitment of axonemal dynein components. Required for centriolar satellite integrity and non-motile cilium assembly. Required for motile cilium formation. Through its role in the beating of primary cilia, involved in the establishment of organ laterality during embryogenesis. Required for sperm flagellum biogenesis and is essential for male fertility. This chain is Cilia- and flagella-associated protein 53, found in Homo sapiens (Human).